Here is a 273-residue protein sequence, read N- to C-terminus: Chaperone protein PsaB (273 aa).

The signal sequence occupies residues 1–31 (MKNLFFSAYKKVFSYITSIVIFMVSLPYAYS). C128 and C163 are joined by a disulfide.

The protein belongs to the periplasmic pilus chaperone family.

The protein resides in the periplasm. Required for the biogenesis of the pH 6 antigen. This is Chaperone protein PsaB (psaB) from Yersinia pestis.